Consider the following 464-residue polypeptide: RYamide receptor (464 aa).

Residues 1–105 (MEHHNSHLLP…EDMWSSAYFK (105 aa)) are Extracellular-facing. N-linked (GlcNAc...) asparagine glycans are attached at residues Asn-49, Asn-79, and Asn-85. The helical transmembrane segment at 106-126 (IIVYMLYIPIFIFALIGNGTV) threads the bilayer. At 127 to 148 (CYIVYSTPRMRTVTNYFIASLA) the chain is on the cytoplasmic side. The chain crosses the membrane as a helical span at residues 149–169 (IGDILMSFFCVPSSFISLFIL). Topologically, residues 170 to 189 (NYWPFGLALCHFVNYSQAVS) are extracellular. A glycan (N-linked (GlcNAc...) asparagine) is linked at Asn-183. A helical transmembrane segment spans residues 190-210 (VLVSAYTLVAISIDRYIAIMW). At 211–221 (PLKPRITKRYA) the chain is on the cytoplasmic side. A helical transmembrane segment spans residues 222–242 (TFIIAGVWFIALATALPIPIV). Topologically, residues 243 to 274 (SGLDIPMSPWHTKCEKYICREMWPSRTQEYYY) are extracellular. Residues 275 to 295 (TLSLFALQFVVPLGVLIFTYA) traverse the membrane as a helical segment. The Cytoplasmic segment spans residues 296–329 (RITIRVWAKRPPGEAETNRDQRMARSKRKMVKMM). A helical transmembrane segment spans residues 330 to 350 (LTVVIVFTCCWLPFNILQLLL). At 351–363 (NDEEFAHWDPLPY) the chain is on the extracellular side. A helical membrane pass occupies residues 364–384 (VWFAFHWLAMSHCCYNPIIYC). Residues 385-464 (YMNARFRSGF…LSCGETSPLR (80 aa)) are Cytoplasmic-facing.

It belongs to the G-protein coupled receptor 1 family.

The protein resides in the cell membrane. Functionally, receptor for the neuropeptides RYamide-1 and RYamide-2. The activity of this receptor is mediated by G proteins which activate a phosphatidyl-inositol-calcium second messenger system. RYamide signaling may suppress feeding behavior. This chain is RYamide receptor, found in Drosophila melanogaster (Fruit fly).